A 71-amino-acid chain; its full sequence is Large ribosomal subunit protein eL38 (71 aa).

Belongs to the eukaryotic ribosomal protein eL38 family.

This chain is Large ribosomal subunit protein eL38 (RpL38), found in Argas monolakensis (Mono lake bird tick).